The primary structure comprises 272 residues: 1,4-dihydroxy-6-naphtoate synthase (272 aa).

Substrate contacts are provided by residues 55–57 (KLS) and 107–108 (TA). Residue His-145 is the Proton acceptor of the active site.

Belongs to the MqnA/MqnD family. MqnD subfamily.

The enzyme catalyses cyclic dehypoxanthinylfutalosinate = 1,4-dihydroxy-6-naphthoate + dihydroxyacetone. It functions in the pathway quinol/quinone metabolism; menaquinone biosynthesis. Its function is as follows. Catalyzes the conversion of cyclic dehypoxanthine futalosine (cyclic DHFL) into 1,4-dihydroxy-6-naphthoate, a step in the biosynthesis of menaquinone (MK, vitamin K2). The chain is 1,4-dihydroxy-6-naphtoate synthase from Thermus thermophilus (strain ATCC 27634 / DSM 579 / HB8).